A 305-amino-acid polypeptide reads, in one-letter code: Glyceraldehyde-3-phosphate dehydrogenase 2, cytosolic (305 aa).

Residues D3 and R50 each contribute to the NAD(+) site. Residues 121 to 123 (SCT), T152, 181 to 182 (TG), and R204 each bind D-glyceraldehyde 3-phosphate. C122 (nucleophile) is an active-site residue. Position 286 (N286) interacts with NAD(+).

The protein belongs to the glyceraldehyde-3-phosphate dehydrogenase family. As to quaternary structure, homotetramer.

It localises to the cytoplasm. It carries out the reaction D-glyceraldehyde 3-phosphate + phosphate + NAD(+) = (2R)-3-phospho-glyceroyl phosphate + NADH + H(+). Its pathway is carbohydrate degradation; glycolysis; pyruvate from D-glyceraldehyde 3-phosphate: step 1/5. Its function is as follows. Key enzyme in glycolysis that catalyzes the first step of the pathway by converting D-glyceraldehyde 3-phosphate (G3P) into 3-phospho-D-glyceroyl phosphate. Essential for the maintenance of cellular ATP levels and carbohydrate metabolism. In Hordeum vulgare (Barley), this protein is Glyceraldehyde-3-phosphate dehydrogenase 2, cytosolic (GAPC).